A 126-amino-acid chain; its full sequence is UPF0102 protein BCAN_A0183 (126 aa).

It belongs to the UPF0102 family.

The polypeptide is UPF0102 protein BCAN_A0183 (Brucella canis (strain ATCC 23365 / NCTC 10854 / RM-666)).